Consider the following 366-residue polypeptide: uncharacterized protein (366 aa).

6 helical membrane passes run 30-50 (FWTY…AVGI), 66-86 (IIIA…IIVI), 136-156 (IFIS…GYLA), 162-182 (IILF…LDLL), 198-218 (IGVV…IYDI), and 225-245 (YIPE…IIDV).

The protein localises to the cell membrane. This is an uncharacterized protein from Methanocaldococcus jannaschii (strain ATCC 43067 / DSM 2661 / JAL-1 / JCM 10045 / NBRC 100440) (Methanococcus jannaschii).